We begin with the raw amino-acid sequence, 235 residues long: GNKQSPVDIKSSEVKHDTSLKPFSVSYNPASAKEIINVGHSFHVNFEDDSQSVLKGGPLSDNYRLSQFHFHWGKTDDYGSEHTVDGAKFSAELHLVHWNSGKYPNIADSVSKADGLAIVAVFLKVGQANPKLQKVLDALSAVKTKGKKASFTNFDPSTLLPPSLDYWTYSGSLTHPPLHESVTWLICKDSISISSEQLAQFRSLLSNAEGEAAVPILHNNRPPQPLKGRTVKASF.

Positions 1 to 235 (GNKQSPVDIK…LKGRTVKASF (235 aa)) constitute an Alpha-carbonic anhydrase domain. Catalysis depends on His40, which acts as the Proton donor/acceptor. Zn(2+) contacts are provided by His69, His71, and His94. Residues Thr174 and 174–175 (TH) contribute to the substrate site.

It belongs to the alpha-carbonic anhydrase family. Zn(2+) serves as cofactor.

It is found in the cytoplasm. It carries out the reaction hydrogencarbonate + H(+) = CO2 + H2O. The catalysed reaction is urea = cyanamide + H2O. Inhibited by acetazolamide. Its function is as follows. Catalyzes the reversible hydration of carbon dioxide. Can hydrate cyanamide to urea. The chain is Carbonic anhydrase 1 (CA1) from Oryctolagus cuniculus (Rabbit).